Here is a 638-residue protein sequence, read N- to C-terminus: 1-deoxy-D-xylulose-5-phosphate synthase (638 aa).

Thiamine diphosphate contacts are provided by residues H79 and 120–122; that span reads AHS. D151 contacts Mg(2+). Thiamine diphosphate-binding positions include 152–153, N180, Y289, and E371; that span reads GA. Mg(2+) is bound at residue N180.

The protein belongs to the transketolase family. DXPS subfamily. Homodimer. The cofactor is Mg(2+). Thiamine diphosphate is required as a cofactor.

The enzyme catalyses D-glyceraldehyde 3-phosphate + pyruvate + H(+) = 1-deoxy-D-xylulose 5-phosphate + CO2. It participates in metabolic intermediate biosynthesis; 1-deoxy-D-xylulose 5-phosphate biosynthesis; 1-deoxy-D-xylulose 5-phosphate from D-glyceraldehyde 3-phosphate and pyruvate: step 1/1. In terms of biological role, catalyzes the acyloin condensation reaction between C atoms 2 and 3 of pyruvate and glyceraldehyde 3-phosphate to yield 1-deoxy-D-xylulose-5-phosphate (DXP). This Rhizobium leguminosarum bv. trifolii (strain WSM2304) protein is 1-deoxy-D-xylulose-5-phosphate synthase.